An 804-amino-acid chain; its full sequence is G-type lectin S-receptor-like serine/threonine-protein kinase At1g61490 (804 aa).

Residues 1–24 (MGKKRIVFFACLLLFTVLLRFSYA) form the signal peptide. Positions 25–144 (GITTESPLSV…ASGRTLWESF (120 aa)) constitute a Bulb-type lectin domain. At 25–425 (GITTESPLSV…SELGGNKRNK (401 aa)) the chain is on the extracellular side. 6 N-linked (GlcNAc...) asparagine glycosylation sites follow: asparagine 53, asparagine 94, asparagine 117, asparagine 134, asparagine 236, and asparagine 267. One can recognise an EGF-like domain in the interval 278 to 314 (PANSCDIYGVCGPFGLCIVSVPLKCKCLKGFVPHSTE). 2 disulfide bridges follow: cysteine 282-cysteine 294 and cysteine 288-cysteine 302. N-linked (GlcNAc...) asparagine glycosylation is found at asparagine 320, asparagine 336, and asparagine 375. Residues 333-415 (CQGNSTGKDV…GEILSIRLAH (83 aa)) form the PAN domain. 2 disulfide bridges follow: cysteine 368-cysteine 389 and cysteine 372-cysteine 378. Residues 426–446 (IIVASTVSLSLFVILTSAAFG) form a helical membrane-spanning segment. Over 447–804 (FWRYRVKHKA…EMTQSMILGR (358 aa)) the chain is Cytoplasmic. Positions 490 to 775 (FSLSNKLGQG…DLPSPKQPTF (286 aa)) constitute a Protein kinase domain. Residues 496–504 (LGQGGFGSV) and lysine 518 contribute to the ATP site. Residues serine 524 and serine 539 each carry the phosphoserine modification. The segment at 579-596 (RKKLEVDWPKRFDIVQGI) is caM-binding. The Proton acceptor role is filled by aspartate 615. A phosphoserine mark is found at serine 619 and serine 632. At threonine 649 the chain carries Phosphothreonine. Serine 692 carries the post-translational modification Phosphoserine.

Belongs to the protein kinase superfamily. Ser/Thr protein kinase family.

Its subcellular location is the cell membrane. The catalysed reaction is L-seryl-[protein] + ATP = O-phospho-L-seryl-[protein] + ADP + H(+). It carries out the reaction L-threonyl-[protein] + ATP = O-phospho-L-threonyl-[protein] + ADP + H(+). In Arabidopsis thaliana (Mouse-ear cress), this protein is G-type lectin S-receptor-like serine/threonine-protein kinase At1g61490.